A 619-amino-acid polypeptide reads, in one-letter code: Vitamin B12 transporter BtuB (619 aa).

The first 25 residues, 1-25, serve as a signal peptide directing secretion; that stretch reads MINKKRLLLSTVSIMVISGWNQASA. Positions 31–38 match the TonB box motif; sequence DSLVVTAS. The region spanning 43–157 is the TBDR plug domain; sequence PISSILAPYT…IGGVINIITT (115 aa). Residues Leu88, Ser90, and 115–116 each bind cyanocob(III)alamin; that span reads IS. The TBDR beta-barrel domain maps to 160 to 619; that stretch reads KLGTSLNVGI…EYYLTGSYNF (460 aa). 3 beta stranded membrane passes run 163-170, 174-183, and 189-200; these read TSLNVGIG, YQTYDGATQQ, and TVLTAAANYTYT. 4 residues coordinate Ca(2+): Asp204, Gln216, Asp218, and Asp220. 2 beta stranded membrane passes run 222-232 and 237-253; these read FMSKMLWLGVD and EQVSGFVRAYGYNNRTS. Ca(2+) contacts are provided by Tyr254 and Asp255. Cyanocob(III)alamin is bound at residue Ala256. Ca(2+) is bound at residue Asp268. Transmembrane regions (beta stranded) follow at residues 270–284, 286–303, 316–332, 335–344, 360–376, 378–388, 392–407, 410–424, 441–450, 456–465, 478–495, 499–514, 522–534, 540–556, 563–577, 590–601, and 607–619; these read RELYSRHYDMGVRFN, GIYSSQLITSYSHTKDYN, SLNDSEQYNLQWGNTFQ, QGIVSTGVDF, KTVRNTGMYLTAQQQLK, FILEGAIRSDK, AGWNTTWQASLGWEFI, YRLIASYGTAFKAPT, ESKQWEGGIE, LTWRMTVYRN, YYNIGKAKIKGVEWTGLI, MFQHQLTIQYIDPRNS, RRAKQQVKYQLDW, DWGLTYQYLGRRYDKDF, RVKLGGVSFWDLTVS, IANLLDKDYETV, and PGREYYLTGSYNF. Position 316 (Ser316) interacts with cyanocob(III)alamin. Cyanocob(III)alamin is bound at residue Arg522. The TonB C-terminal box motif lies at 602–619; sequence YGYRIPGREYYLTGSYNF.

It belongs to the TonB-dependent receptor family. BtuB (TC 1.B.14.3.1) subfamily.

The protein resides in the cell outer membrane. Functionally, involved in the active translocation of vitamin B12 (cyanocobalamin) across the outer membrane to the periplasmic space. It derives its energy for transport by interacting with the trans-periplasmic membrane protein TonB. The polypeptide is Vitamin B12 transporter BtuB (Photorhabdus laumondii subsp. laumondii (strain DSM 15139 / CIP 105565 / TT01) (Photorhabdus luminescens subsp. laumondii)).